Reading from the N-terminus, the 203-residue chain is dITP/XTP pyrophosphatase (203 aa).

Substrate is bound at residue 15 to 20 (SGNAGK). Mg(2+)-binding residues include Glu45 and Asp74. Catalysis depends on Asp74, which acts as the Proton acceptor. Substrate is bound by residues Ser75, 153–156 (FGYD), Lys176, and 181–182 (HR).

It belongs to the HAM1 NTPase family. Homodimer. It depends on Mg(2+) as a cofactor.

It catalyses the reaction XTP + H2O = XMP + diphosphate + H(+). The catalysed reaction is dITP + H2O = dIMP + diphosphate + H(+). It carries out the reaction ITP + H2O = IMP + diphosphate + H(+). Pyrophosphatase that catalyzes the hydrolysis of nucleoside triphosphates to their monophosphate derivatives, with a high preference for the non-canonical purine nucleotides XTP (xanthosine triphosphate), dITP (deoxyinosine triphosphate) and ITP. Seems to function as a house-cleaning enzyme that removes non-canonical purine nucleotides from the nucleotide pool, thus preventing their incorporation into DNA/RNA and avoiding chromosomal lesions. The sequence is that of dITP/XTP pyrophosphatase from Prochlorococcus marinus (strain MIT 9313).